We begin with the raw amino-acid sequence, 207 residues long: Guanylate kinase (207 aa).

Residues 4-184 (GTLYIVSAPS…ALMDFKAILR (181 aa)) form the Guanylate kinase-like domain. Residue 11-18 (APSGAGKS) coordinates ATP.

The protein belongs to the guanylate kinase family.

It localises to the cytoplasm. It carries out the reaction GMP + ATP = GDP + ADP. Functionally, essential for recycling GMP and indirectly, cGMP. This is Guanylate kinase from Vibrio parahaemolyticus serotype O3:K6 (strain RIMD 2210633).